The primary structure comprises 844 residues: Fe(2+) transport protein A/Fe(2+) transporter FeoB fusion protein (844 aa).

The tract at residues 1–73 (MRLSELHTGD…EDAAKIEVEL (73 aa)) is feoA. The interval 74–844 (ISSNATSSPA…LIYRIGILFF (771 aa)) is feoB. Polar residues predominate over residues 79–106 (TSSPASNDIGEQSANPDSNESIPTNPTE). A disordered region spans residues 79–110 (TSSPASNDIGEQSANPDSNESIPTNPTEDISA). Positions 126-289 (VIRVALIGNP…FDTLISIHEG (164 aa)) constitute a FeoB-type G domain. GTP is bound by residues 133–140 (GNPNCGKT), 158–162 (GVTVE), 179–182 (DLPG), 240–243 (NMFD), and 269–271 (VGR). Transmembrane regions (helical) follow at residues 418 to 438 (VLGF…TFVL), 475 to 495 (IGGV…YFFI), 520 to 540 (LHGK…PAIM), 559 to 579 (PLMS…AFFP), 581 to 601 (SAGL…VLLA), 646 to 666 (MGSI…YPRY), 786 to 806 (IIAL…ATVV), and 817 to 837 (WAVF…FLIY).

The protein in the N-terminal section; belongs to the FeoA family. In the C-terminal section; belongs to the TRAFAC class TrmE-Era-EngA-EngB-Septin-like GTPase superfamily. FeoB GTPase (TC 9.A.8) family.

The protein resides in the cell inner membrane. Probable transporter of a GTP-driven Fe(2+) uptake system. This Porphyromonas gingivalis (strain ATCC BAA-308 / W83) protein is Fe(2+) transport protein A/Fe(2+) transporter FeoB fusion protein.